The following is a 294-amino-acid chain: Thymidylate synthase (294 aa).

DUMP is bound by residues Arg30 and 156–157 (RR). Cys176 acts as the Nucleophile in catalysis. DUMP contacts are provided by residues 196–199 (RSGD), Asn207, and 237–239 (HVY). Asp199 serves as a coordination point for (6R)-5,10-methylene-5,6,7,8-tetrahydrofolate. Ala293 contacts (6R)-5,10-methylene-5,6,7,8-tetrahydrofolate.

It belongs to the thymidylate synthase family. Homodimer.

The enzyme catalyses dUMP + (6R)-5,10-methylene-5,6,7,8-tetrahydrofolate = 7,8-dihydrofolate + dTMP. It functions in the pathway pyrimidine metabolism; dTTP biosynthesis. The protein is Thymidylate synthase of Ascaris suum (Pig roundworm).